The chain runs to 128 residues: Calcitonin gene-related peptide 1 (128 aa).

Residues 1 to 25 (MGFLKFSPFLVVSILLLYQACSLQA) form the signal peptide. Residues 26–80 (VPLRSILESSPGMATLSEEEVRLLAALVQDYMQMKARELEQEEEQEAEGSSVTAQ) constitute a propeptide that is removed on maturation. C84 and C89 are joined by a disulfide. Phenylalanine amide is present on F119. Positions 125 to 128 (DLQA) are excised as a propeptide.

This sequence belongs to the calcitonin family. Detected in nerve cells of cerebrum, hippocampus and pons/midbrain in newborns, and only in nerve cells of pons/midbrain in adult.

The protein localises to the secreted. CGRP1/CALCA is a peptide hormone that induces vasodilation mediated by the CALCRL-RAMP1 receptor complex. Dilates a variety of vessels including the coronary, cerebral and systemic vasculature. Its abundance in the CNS also points toward a neurotransmitter or neuromodulator role. It also elevates platelet cAMP. CGRP1 can also bind and activate CALCR-RAMP1 (AMYR1) receptor complex. The polypeptide is Calcitonin gene-related peptide 1 (Mus musculus (Mouse)).